A 376-amino-acid polypeptide reads, in one-letter code: uncharacterized protein (376 aa).

Residues 19–39 (FVLISLILLLNLGLLLGIQIY) traverse the membrane as a helical segment.

To S.pombe SpAC5H10.12c.

The protein localises to the cytoplasm. It localises to the nucleus. Its subcellular location is the membrane. This is an uncharacterized protein from Schizosaccharomyces pombe (strain 972 / ATCC 24843) (Fission yeast).